Consider the following 37-residue polypeptide: Hemocyanin subunit B (37 aa).

The protein belongs to the tyrosinase family. Hemocyanin subfamily. Hemolymph.

It localises to the secreted. The protein localises to the extracellular space. In terms of biological role, hemocyanins are copper-containing oxygen carriers occurring freely dissolved in the hemolymph of many mollusks and arthropods. This chain is Hemocyanin subunit B, found in Cancer pagurus (Rock crab).